Consider the following 687-residue polypeptide: FAD-dependent oxidoreductase domain-containing protein 2 (687 aa).

The first 22 residues, 1-22 (MSVIQLVFRLLCVLDLLLAVSA), serve as a signal peptide directing secretion. Asparagine 29 and asparagine 305 each carry an N-linked (GlcNAc...) asparagine glycan.

Belongs to the FOXRED2 family. The cofactor is FAD. In terms of processing, N-glycosylated.

It is found in the endoplasmic reticulum lumen. Its function is as follows. Probable flavoprotein which may function in endoplasmic reticulum associated degradation (ERAD). May bind non-native proteins in the endoplasmic reticulum and target them to the ubiquitination machinery for subsequent degradation. This Danio rerio (Zebrafish) protein is FAD-dependent oxidoreductase domain-containing protein 2 (foxred2).